We begin with the raw amino-acid sequence, 374 residues long: Carboxypeptidase O (374 aa).

The N-terminal stretch at 1 to 20 (MKPLLETLYLLGMLVPGGLG) is a signal peptide. Residues 49–344 (IYHPMGEIYE…EAVLSVLDDV (296 aa)) form the Peptidase M14 domain. Zn(2+)-binding residues include H108 and E111. N-linked (GlcNAc...) asparagine glycans are attached at residues N132, N174, and N187. H236 contributes to the Zn(2+) binding site. N251 is a glycosylation site (N-linked (GlcNAc...) asparagine). E310 (proton donor/acceptor) is an active-site residue. D352 is lipidated: GPI-anchor amidated aspartate. The propeptide at 353–374 (SAGRVTSATMLLGLLVSCMSLL) is removed in mature form.

It belongs to the peptidase M14 family. Requires Zn(2+) as cofactor. In terms of processing, N-glycosylated. In terms of tissue distribution, detected in enterocytes of the ileum.

Its subcellular location is the apical cell membrane. Strongly inhibited by potato carboxypeptidase inhibitor, and the chelating agents EDTA and 1,10-phenanthroline. Also inhibited by compounds with multiple carboxylic acid groups such as citrate and succinate, and to a lesser exent the amino acids aspartate and glutamate. Not significantly inhibited by benzylsuccinic acid. Its function is as follows. Carboxypeptidase which preferentially cleaves C-terminal acidic residues from peptides and proteins. Can also cleave C-terminal hydrophobic amino acids, with a preference for small residues over large residues. The polypeptide is Carboxypeptidase O (Homo sapiens (Human)).